The following is a 269-amino-acid chain: Undecaprenyl-diphosphatase (269 aa).

8 consecutive transmembrane segments (helical) span residues 4 to 24 (IELW…WLPI), 50 to 70 (LWLH…PYWL), 86 to 106 (LFAI…YKVL), 113 to 133 (ATGD…GLLL), 146 to 166 (VNVV…IPGI), 186 to 206 (AVWL…ALEL), 220 to 240 (WMVT…EVLL), and 246 to 266 (LDFS…PLAA).

This sequence belongs to the UppP family.

Its subcellular location is the cell membrane. It carries out the reaction di-trans,octa-cis-undecaprenyl diphosphate + H2O = di-trans,octa-cis-undecaprenyl phosphate + phosphate + H(+). Its function is as follows. Catalyzes the dephosphorylation of undecaprenyl diphosphate (UPP). The sequence is that of Undecaprenyl-diphosphatase from Methanopyrus kandleri (strain AV19 / DSM 6324 / JCM 9639 / NBRC 100938).